The sequence spans 727 residues: 1,4-alpha-glucan branching enzyme GlgB (727 aa).

Residue Asp411 is the Nucleophile of the active site. Residue Glu464 is the Proton donor of the active site.

It belongs to the glycosyl hydrolase 13 family. GlgB subfamily. Monomer.

It carries out the reaction Transfers a segment of a (1-&gt;4)-alpha-D-glucan chain to a primary hydroxy group in a similar glucan chain.. It functions in the pathway glycan biosynthesis; glycogen biosynthesis. Catalyzes the formation of the alpha-1,6-glucosidic linkages in glycogen by scission of a 1,4-alpha-linked oligosaccharide from growing alpha-1,4-glucan chains and the subsequent attachment of the oligosaccharide to the alpha-1,6 position. This Protochlamydia amoebophila (strain UWE25) protein is 1,4-alpha-glucan branching enzyme GlgB.